A 697-amino-acid chain; its full sequence is Potassium-transporting ATPase ATP-binding subunit (697 aa).

4 helical membrane-spanning segments follow: residues valine 36 to isoleucine 56, leucine 66 to alanine 86, isoleucine 218 to isoleucine 238, and valine 253 to isoleucine 273. Aspartate 306 serves as the catalytic 4-aspartylphosphate intermediate. ATP-binding positions include aspartate 343, glutamate 347, phenylalanine 376 to serine 383, and lysine 394. 2 residues coordinate Mg(2+): aspartate 526 and aspartate 530. A run of 3 helical transmembrane segments spans residues tyrosine 595–glycine 615, alanine 631–leucine 651, and leucine 669–methionine 689.

The protein belongs to the cation transport ATPase (P-type) (TC 3.A.3) family. Type IA subfamily. In terms of assembly, the system is composed of three essential subunits: KdpA, KdpB and KdpC.

It is found in the cell inner membrane. It catalyses the reaction K(+)(out) + ATP + H2O = K(+)(in) + ADP + phosphate + H(+). In terms of biological role, part of the high-affinity ATP-driven potassium transport (or Kdp) system, which catalyzes the hydrolysis of ATP coupled with the electrogenic transport of potassium into the cytoplasm. This subunit is responsible for energy coupling to the transport system and for the release of the potassium ions to the cytoplasm. The polypeptide is Potassium-transporting ATPase ATP-binding subunit (Mesorhizobium japonicum (strain LMG 29417 / CECT 9101 / MAFF 303099) (Mesorhizobium loti (strain MAFF 303099))).